Reading from the N-terminus, the 250-residue chain is Ribosomal RNA small subunit methyltransferase J (250 aa).

Residues 102–103, 118–119, 154–155, and aspartate 172 contribute to the S-adenosyl-L-methionine site; these read RD, ER, and SS.

It belongs to the methyltransferase superfamily. RsmJ family.

It localises to the cytoplasm. The catalysed reaction is guanosine(1516) in 16S rRNA + S-adenosyl-L-methionine = N(2)-methylguanosine(1516) in 16S rRNA + S-adenosyl-L-homocysteine + H(+). Specifically methylates the guanosine in position 1516 of 16S rRNA. This Edwardsiella ictaluri (strain 93-146) protein is Ribosomal RNA small subunit methyltransferase J.